A 154-amino-acid polypeptide reads, in one-letter code: Myoglobin (154 aa).

The Globin domain occupies 2-148; it reads GLSDQEWQQV…FRNDMASKYK (147 aa). A nitrite-binding site is contributed by histidine 65. Histidine 65 is an O2 binding site. Position 94 (histidine 94) interacts with heme b.

Monomeric.

It localises to the cytoplasm. Its subcellular location is the sarcoplasm. It carries out the reaction Fe(III)-heme b-[protein] + nitric oxide + H2O = Fe(II)-heme b-[protein] + nitrite + 2 H(+). It catalyses the reaction H2O2 + AH2 = A + 2 H2O. In terms of biological role, monomeric heme protein which primary function is to store oxygen and facilitate its diffusion within muscle tissues. Reversibly binds oxygen through a pentacoordinated heme iron and enables its timely and efficient release as needed during periods of heightened demand. Depending on the oxidative conditions of tissues and cells, and in addition to its ability to bind oxygen, it also has a nitrite reductase activity whereby it regulates the production of bioactive nitric oxide. Under stress conditions, like hypoxia and anoxia, it also protects cells against reactive oxygen species thanks to its pseudoperoxidase activity. This Struthio camelus (Common ostrich) protein is Myoglobin (MB).